Consider the following 354-residue polypeptide: Biotin synthase (354 aa).

A Radical SAM core domain is found at 41–268; the sequence is NEVQISRLLS…LSRVRLSAGR (228 aa). [4Fe-4S] cluster is bound by residues cysteine 56, cysteine 60, and cysteine 63. [2Fe-2S] cluster contacts are provided by cysteine 100, cysteine 131, cysteine 191, and arginine 263.

Belongs to the radical SAM superfamily. Biotin synthase family. As to quaternary structure, homodimer. The cofactor is [4Fe-4S] cluster. It depends on [2Fe-2S] cluster as a cofactor.

It carries out the reaction (4R,5S)-dethiobiotin + (sulfur carrier)-SH + 2 reduced [2Fe-2S]-[ferredoxin] + 2 S-adenosyl-L-methionine = (sulfur carrier)-H + biotin + 2 5'-deoxyadenosine + 2 L-methionine + 2 oxidized [2Fe-2S]-[ferredoxin]. It participates in cofactor biosynthesis; biotin biosynthesis; biotin from 7,8-diaminononanoate: step 2/2. Its function is as follows. Catalyzes the conversion of dethiobiotin (DTB) to biotin by the insertion of a sulfur atom into dethiobiotin via a radical-based mechanism. The polypeptide is Biotin synthase (Shewanella amazonensis (strain ATCC BAA-1098 / SB2B)).